Consider the following 122-residue polypeptide: Large ribosomal subunit protein bL17 (122 aa).

It belongs to the bacterial ribosomal protein bL17 family. In terms of assembly, part of the 50S ribosomal subunit. Contacts protein L32.

The chain is Large ribosomal subunit protein bL17 from Neisseria meningitidis serogroup C / serotype 2a (strain ATCC 700532 / DSM 15464 / FAM18).